Consider the following 202-residue polypeptide: dITP/XTP pyrophosphatase (202 aa).

Residue 11–16 (TNNANK) coordinates substrate. Catalysis depends on D73, which acts as the Proton acceptor. D73 contributes to the Mg(2+) binding site. Substrate is bound by residues S74, 155-158 (FGYD), K178, and 183-184 (HR).

This sequence belongs to the HAM1 NTPase family. As to quaternary structure, homodimer. Mg(2+) serves as cofactor.

It carries out the reaction XTP + H2O = XMP + diphosphate + H(+). The enzyme catalyses dITP + H2O = dIMP + diphosphate + H(+). The catalysed reaction is ITP + H2O = IMP + diphosphate + H(+). Functionally, pyrophosphatase that catalyzes the hydrolysis of nucleoside triphosphates to their monophosphate derivatives, with a high preference for the non-canonical purine nucleotides XTP (xanthosine triphosphate), dITP (deoxyinosine triphosphate) and ITP. Seems to function as a house-cleaning enzyme that removes non-canonical purine nucleotides from the nucleotide pool, thus preventing their incorporation into DNA/RNA and avoiding chromosomal lesions. This is dITP/XTP pyrophosphatase from Lactiplantibacillus plantarum (strain ATCC BAA-793 / NCIMB 8826 / WCFS1) (Lactobacillus plantarum).